The chain runs to 623 residues: Kelch repeat and BTB domain-containing protein 2 (623 aa).

The 68-residue stretch at 31-98 (TDIVLIVEGT…AYTGNLAMND (68 aa)) folds into the BTB domain. Positions 133–229 (CVRLLSFADL…IRIDALSEVT (97 aa)) constitute a BACK domain. S300 carries the post-translational modification Phosphoserine. 5 Kelch repeats span residues 317–380 (DIYI…CCEG), 381–429 (HIYA…VVHD), 431–469 (IYVMTLNLMYCYFPRSDSWVEMAMRQTSRSFASAAAFGD), 470–529 (KIFY…RAVV), and 535–581 (CVFM…DFRC).

In terms of assembly, component of the BCR(KBTBD2) E3 ubiquitin ligase complex, at least composed of CUL3, KBTBD2 and RBX1. Interacts (via the BTB domain) with CUL3.

It participates in protein modification; protein ubiquitination. Its function is as follows. Substrate-specific adapter of a BCR (BTB-CUL3-RBX1) E3 ubiquitin ligase complex that acts as a regulator of the insulin signaling pathway, modulating insulin sensitivity by limiting PIK3R1/p85alpha abundance in adipocytes. Targets PIK3R1, the regulatory subunit of phosphatidylinositol 3-kinase (PI3K), for 'Lys-48'-linked polyubiquitination and proteasome-mediated degradation. This chain is Kelch repeat and BTB domain-containing protein 2 (KBTBD2), found in Pongo abelii (Sumatran orangutan).